The primary structure comprises 72 residues: Translational regulator CsrA (72 aa).

This sequence belongs to the CsrA/RsmA family. In terms of assembly, homodimer; the beta-strands of each monomer intercalate to form a hydrophobic core, while the alpha-helices form wings that extend away from the core.

The protein localises to the cytoplasm. Its function is as follows. A translational regulator that binds mRNA to regulate translation initiation and/or mRNA stability. Usually binds in the 5'-UTR at or near the Shine-Dalgarno sequence preventing ribosome-binding, thus repressing translation. Its main target seems to be the major flagellin gene, while its function is anatagonized by FliW. The chain is Translational regulator CsrA from Ruminiclostridium cellulolyticum (strain ATCC 35319 / DSM 5812 / JCM 6584 / H10) (Clostridium cellulolyticum).